The following is a 155-amino-acid chain: Aspartate carbamoyltransferase regulatory chain (155 aa).

Zn(2+)-binding residues include cysteine 113, cysteine 118, cysteine 139, and cysteine 142.

This sequence belongs to the PyrI family. As to quaternary structure, contains catalytic and regulatory chains. It depends on Zn(2+) as a cofactor.

Involved in allosteric regulation of aspartate carbamoyltransferase. In Methanosphaerula palustris (strain ATCC BAA-1556 / DSM 19958 / E1-9c), this protein is Aspartate carbamoyltransferase regulatory chain.